A 338-amino-acid chain; its full sequence is Anthranilate phosphoribosyltransferase (338 aa).

5-phospho-alpha-D-ribose 1-diphosphate is bound by residues G81, G84 to D85, T89, N91 to T94, K109 to S117, and T121. G81 lines the anthranilate pocket. S93 is a binding site for Mg(2+). Position 112 (N112) interacts with anthranilate. R167 serves as a coordination point for anthranilate. D225 and E226 together coordinate Mg(2+).

It belongs to the anthranilate phosphoribosyltransferase family. As to quaternary structure, homodimer. Mg(2+) serves as cofactor.

It carries out the reaction N-(5-phospho-beta-D-ribosyl)anthranilate + diphosphate = 5-phospho-alpha-D-ribose 1-diphosphate + anthranilate. It participates in amino-acid biosynthesis; L-tryptophan biosynthesis; L-tryptophan from chorismate: step 2/5. Its function is as follows. Catalyzes the transfer of the phosphoribosyl group of 5-phosphorylribose-1-pyrophosphate (PRPP) to anthranilate to yield N-(5'-phosphoribosyl)-anthranilate (PRA). This chain is Anthranilate phosphoribosyltransferase, found in Rhizobium rhizogenes (strain K84 / ATCC BAA-868) (Agrobacterium radiobacter).